Consider the following 398-residue polypeptide: Enoyl-[acyl-carrier-protein] reductase [NADH] (398 aa).

NAD(+) is bound by residues 48–53 (GASTGY), 74–75 (FE), 111–112 (DG), and 139–140 (LA). Tyrosine 225 is a binding site for substrate. Tyrosine 235 acts as the Proton donor in catalysis. NAD(+) contacts are provided by residues lysine 244 and 273–275 (VVT).

This sequence belongs to the TER reductase family. Monomer.

It carries out the reaction a 2,3-saturated acyl-[ACP] + NAD(+) = a (2E)-enoyl-[ACP] + NADH + H(+). Its pathway is lipid metabolism; fatty acid biosynthesis. Its function is as follows. Involved in the final reduction of the elongation cycle of fatty acid synthesis (FAS II). Catalyzes the reduction of a carbon-carbon double bond in an enoyl moiety that is covalently linked to an acyl carrier protein (ACP). The polypeptide is Enoyl-[acyl-carrier-protein] reductase [NADH] (Variovorax paradoxus (strain S110)).